The sequence spans 414 residues: 2,3-diketo-5-methylthiopentyl-1-phosphate enolase (414 aa).

Lys-99 serves as the catalytic Proton acceptor. Residues Lys-148, 174-177, His-265, Gly-338, and 360-361 each bind substrate; these read KDDE and GG. Mg(2+)-binding residues include Lys-174, Asp-176, and Glu-177. An N6-carboxylysine modification is found at Lys-174.

It belongs to the RuBisCO large chain family. Type IV subfamily. As to quaternary structure, homodimer. Mg(2+) serves as cofactor.

The enzyme catalyses 5-methylsulfanyl-2,3-dioxopentyl phosphate = 2-hydroxy-5-methylsulfanyl-3-oxopent-1-enyl phosphate. It functions in the pathway amino-acid biosynthesis; L-methionine biosynthesis via salvage pathway; L-methionine from S-methyl-5-thio-alpha-D-ribose 1-phosphate: step 3/6. Catalyzes the enolization of 2,3-diketo-5-methylthiopentyl-1-phosphate (DK-MTP-1-P) into 2-hydroxy-3-keto-5-methylthiopentenyl-1-phosphate (HK-MTPenyl-1-P). The chain is 2,3-diketo-5-methylthiopentyl-1-phosphate enolase from Bacillus cereus (strain AH820).